Here is a 199-residue protein sequence, read N- to C-terminus: Probable V-type proton ATPase 20 kDa proteolipid subunit (199 aa).

The Vacuolar segment spans residues 1–3 (MSL). Residues 4–24 (FSTSLWTTTVMSIIVGLYMLF) traverse the membrane as a helical segment. Residues 25–46 (HNSGESFDFGSFLLDTSPYTWG) lie on the Cytoplasmic side of the membrane. A helical membrane pass occupies residues 47-67 (LLGIASCVAFGIIGAAWGIFI). Residues 68–86 (CGTSILGGAVKAPRIKTKN) lie on the Vacuolar side of the membrane. The helical transmembrane segment at 87–107 (LISIIFCEVVAIYSLIIAIVF) threads the bilayer. The Cytoplasmic segment spans residues 108–130 (SAKINDINPAGFYTKSHYYTGFA). A helical membrane pass occupies residues 131 to 151 (LFWGGITVGLCNLICGVCVGI). Topologically, residues 152–170 (TGSSAALADAQDASLFVKV) are vacuolar. A helical transmembrane segment spans residues 171 to 191 (LVVEIFGSVLGLFGLIVGLLI). The Cytoplasmic segment spans residues 192-199 (GGKASDFS).

Belongs to the V-ATPase proteolipid subunit family. In terms of assembly, V-ATPase is a heteromultimeric enzyme composed of a peripheral catalytic V1 complex (components A to H) attached to an integral membrane V0 proton pore complex (components: a, c, c', c'', d, e, f and VOA1). The decameric c-ring forms the proton-conducting pore, and is composed of eight proteolipid subunits c, one subunit c' and one subunit c''.

The protein localises to the vacuole membrane. In terms of biological role, proton-conducting pore forming subunit of the V0 complex of vacuolar(H+)-ATPase (V-ATPase), a multisubunit enzyme composed of a peripheral complex (V1) that hydrolyzes ATP and a membrane integral complex (V0) that translocates protons. V-ATPase is responsible for acidifying and maintaining the pH of intracellular compartments. The chain is Probable V-type proton ATPase 20 kDa proteolipid subunit (vma16) from Schizosaccharomyces pombe (strain 972 / ATCC 24843) (Fission yeast).